The following is a 292-amino-acid chain: Porphobilinogen deaminase (292 aa).

Cys-236 is modified (S-(dipyrrolylmethanemethyl)cysteine).

The protein belongs to the HMBS family. As to quaternary structure, monomer. The cofactor is dipyrromethane.

It carries out the reaction 4 porphobilinogen + H2O = hydroxymethylbilane + 4 NH4(+). The protein operates within porphyrin-containing compound metabolism; protoporphyrin-IX biosynthesis; coproporphyrinogen-III from 5-aminolevulinate: step 2/4. Tetrapolymerization of the monopyrrole PBG into the hydroxymethylbilane pre-uroporphyrinogen in several discrete steps. This chain is Porphobilinogen deaminase, found in Wolbachia sp. subsp. Drosophila simulans (strain wRi).